A 332-amino-acid chain; its full sequence is Endo-1,4-beta-xylanase (332 aa).

Residues 1 to 21 form the signal peptide; the sequence is MLSSTTLLAILSALALTSVQA. The GH10 domain occupies 26–316; the sequence is KNSLDYLANK…KSTYYVVQQA (291 aa). The active-site Proton donor is the E120. Residues C128 and C160 are joined by a disulfide bond. The active-site Nucleophile is E214. A disulfide bond links C247 and C253.

This sequence belongs to the glycosyl hydrolase 10 (cellulase F) family.

It localises to the secreted. The catalysed reaction is Endohydrolysis of (1-&gt;4)-beta-D-xylosidic linkages in xylans.. Requires at least three xylose residues for catalytic activity. Does not have activity against xylobiose. The sequence is that of Endo-1,4-beta-xylanase from Naganishia albida (Cryptococcus albidus).